We begin with the raw amino-acid sequence, 395 residues long: MTQIPTIKQVRAFTLKGGGADYHDQSDGHWIDDHIATPMAKYPEYRQSRRSFGINVLGTLVVEIEDSAGRVGFAVTTGGEPAAYIVEKHLARFLEGARVTDIERIWDQMYLSTLYYGRKGIVINTISGVDLALWDLLGKVRGEPVHQLLGGAVRDELQFYATGARPDLAQKMGFIGGKMPLHHGPAEGEEGLRRNLQELATMRERVGPDFWLMLDCWMSLDVNYATRLAQGAQAHGLKWIEEALPPDDYWGYAALRKNVPTGMLVTTGEHEATRWGFRQLLEMGCCDIIQPDVGWCGGITELLKISALADAHQALVIPHGSSVYSYHFVATRHNSPFAEFLMMAPKADEVVPMFHPQLLGEPVPVNGRMRLSALDRPGFGVELNPECALHRPYTH.

Residues His-23 and Arg-49 each coordinate substrate. 3 residues coordinate Mg(2+): Asp-215, Glu-241, and Glu-269. The active-site Proton acceptor is the His-319. Glu-339 contributes to the substrate binding site.

This sequence belongs to the mandelate racemase/muconate lactonizing enzyme family. RhamD subfamily. As to quaternary structure, homooctamer; tetramer of dimers. Mg(2+) serves as cofactor.

It carries out the reaction L-rhamnonate = 2-dehydro-3-deoxy-L-rhamnonate + H2O. Functionally, catalyzes the dehydration of L-rhamnonate to 2-keto-3-deoxy-L-rhamnonate (KDR). In Delftia acidovorans (strain DSM 14801 / SPH-1), this protein is L-rhamnonate dehydratase.